The chain runs to 295 residues: Protein transport protein SSO2 (295 aa).

The span at 1–18 shows a compositional bias: low complexity; sequence MSNPYQNSQNGYQQNNSY. The tract at residues 1 to 31 is disordered; the sequence is MSNPYQNSQNGYQQNNSYELNNYPNKQYSSS. Residues 1–270 are Cytoplasmic-facing; it reads MSNPYQNSQN…SAKSARKKKL (270 aa). Polar residues predominate over residues 19-31; it reads ELNNYPNKQYSSS. A coiled-coil region spans residues 33 to 110; it reads EDDFVQFMNE…NRIKNVQTQA (78 aa). A t-SNARE coiled-coil homology domain is found at 196–258; sequence LNEVQVRHRE…EQGVGHTNKA (63 aa). Residues 271 to 291 traverse the membrane as a helical; Anchor for type IV membrane protein segment; the sequence is WCFFICLLIVIILAVILGAYF. Over 292 to 295 the chain is Extracellular; it reads GTRK.

It belongs to the syntaxin family.

The protein localises to the membrane. In terms of biological role, late secretory t-SNARE protein required for secretion and proper cytokinesis. Plays an important role in the secretion of virulence-associated extracellular enzymes and vesicle-mediated polarized hyphal growth. This chain is Protein transport protein SSO2 (SSO2), found in Candida albicans (strain SC5314 / ATCC MYA-2876) (Yeast).